The following is a 336-amino-acid chain: UDP-glucose 4-epimerase (336 aa).

NAD(+) contacts are provided by residues 11 to 12 (YI), 31 to 36 (DNLINS), 58 to 59 (DI), 80 to 84 (FAGLK), Asn99, Ser124, Tyr149, Lys153, and Phe178. Positions 124 and 149 each coordinate substrate. The active-site Proton acceptor is the Tyr149. Residues Asn179, 199 to 200 (NL), 216 to 218 (LVY), Arg231, and 290 to 293 (RPGD) contribute to the substrate site.

This sequence belongs to the NAD(P)-dependent epimerase/dehydratase family. In terms of assembly, homodimer. It depends on NAD(+) as a cofactor.

It carries out the reaction UDP-alpha-D-glucose = UDP-alpha-D-galactose. It participates in carbohydrate metabolism; galactose metabolism. In terms of biological role, involved in the metabolism of galactose. Catalyzes the conversion of UDP-galactose (UDP-Gal) to UDP-glucose (UDP-Glc) through a mechanism involving the transient reduction of NAD. The sequence is that of UDP-glucose 4-epimerase (galE) from Yersinia enterocolitica.